Reading from the N-terminus, the 147-residue chain is Interleukin-4 (147 aa).

Positions Met-1–Gly-24 are cleaved as a signal peptide. Cys-48 and Cys-88 are oxidised to a cystine. Asn-62 carries an N-linked (GlcNAc...) asparagine glycan.

It belongs to the IL-4/IL-13 family.

It localises to the secreted. Its function is as follows. Participates in at least several B-cell activation processes as well as of other cell types. It is a costimulator of DNA-synthesis. It induces the expression of class II MHC molecules on resting B-cells. It enhances both secretion and cell surface expression of IgE and IgG1. It also regulates the expression of the low affinity Fc receptor for IgE (CD23) on both lymphocytes and monocytes. Positively regulates IL31RA expression in macrophages. Stimulates autophagy in dendritic cells by interfering with mTORC1 signaling and through the induction of RUFY4. The sequence is that of Interleukin-4 (IL4) from Oryctolagus cuniculus (Rabbit).